Here is a 143-residue protein sequence, read N- to C-terminus: Transcription antitermination protein NusB (143 aa).

Belongs to the NusB family.

Functionally, involved in transcription antitermination. Required for transcription of ribosomal RNA (rRNA) genes. Binds specifically to the boxA antiterminator sequence of the ribosomal RNA (rrn) operons. This Anaeromyxobacter sp. (strain Fw109-5) protein is Transcription antitermination protein NusB.